The following is a 129-amino-acid chain: Defensin-like protein 182 (129 aa).

A signal peptide spans 1 to 26; that stretch reads METVTSLVFIVNLLIIFTSVVNQARG. 8 cysteine pairs are disulfide-bonded: C29/C70, C36/C55, C39/C64, C43/C66, C83/C129, C94/C114, C99/C123, and C103/C125.

It belongs to the DEFL family.

The protein resides in the secreted. Confers broad-spectrum resistance to pathogens. In Arabidopsis thaliana (Mouse-ear cress), this protein is Defensin-like protein 182 (PDF3.2).